Reading from the N-terminus, the 361-residue chain is uncharacterized protein (361 aa).

33-40 lines the ATP pocket; it reads GPINSGKT.

The protein belongs to the archaeal ATPase family.

This is an uncharacterized protein from Methanocaldococcus jannaschii (strain ATCC 43067 / DSM 2661 / JAL-1 / JCM 10045 / NBRC 100440) (Methanococcus jannaschii).